We begin with the raw amino-acid sequence, 124 residues long: Small ribosomal subunit protein uS13 (124 aa).

Positions 98–124 (VRGQRTRCNARTRKGPRKTVGAKRKEK) are disordered.

It belongs to the universal ribosomal protein uS13 family. Part of the 30S ribosomal subunit. Forms a loose heterodimer with protein S19. Forms two bridges to the 50S subunit in the 70S ribosome.

Functionally, located at the top of the head of the 30S subunit, it contacts several helices of the 16S rRNA. In the 70S ribosome it contacts the 23S rRNA (bridge B1a) and protein L5 of the 50S subunit (bridge B1b), connecting the 2 subunits; these bridges are implicated in subunit movement. Contacts the tRNAs in the A and P-sites. This Dictyoglomus turgidum (strain DSM 6724 / Z-1310) protein is Small ribosomal subunit protein uS13.